A 698-amino-acid chain; its full sequence is Epithelial sodium channel subunit alpha (698 aa).

The interval 1 to 70 (MLDHTRAPEL…SAPRQPTEEE (70 aa)) is disordered. Over 1-110 (MLDHTRAPEL…CSKHNRMKTA (110 aa)) the chain is Cytoplasmic. Residues 111 to 131 (FWAVLWLCTFGMMYWQFALLF) traverse the membrane as a helical segment. Residues 132 to 589 (EEYLSYPVSL…SQWSLWFGSS (458 aa)) are Extracellular-facing. 3 disulfides stabilise this stretch: Cys158-Cys332, Cys256-Cys263, and Cys309-Cys316. N-linked (GlcNAc...) asparagine glycosylation occurs at Asn190. A gating release of inhibition by proteolysis (GRIP); protease-sensitive region that is responsible for the proteolytic activation of the channel region spans residues 200-270 (RRRSSRDLLG…SDCFYQTYSS (71 aa)). A disordered region spans residues 213-243 (HPLQRLRTPPPPYSGRTARSGSSSVRDNNPQ). Positions 229–243 (TARSGSSSVRDNNPQ) are enriched in polar residues. Asn259 carries N-linked (GlcNAc...) asparagine glycosylation. N-linked (GlcNAc...) asparagine glycosylation is found at Asn320, Asn339, and Asn424. 7 disulfide bridges follow: Cys421-Cys506, Cys443-Cys483, Cys443-Cys502, Cys447-Cys498, Cys456-Cys483, Cys456-Cys506, and Cys458-Cys472. An N-linked (GlcNAc...) asparagine glycan is attached at Asn538. Residues 590–610 (VLSVVEMAELIFDLLVITLLM) form a helical membrane-spanning segment. At 611–698 (LLRRFRSRYW…DCSACALAAL (88 aa)) the chain is on the cytoplasmic side. Positions 637 to 663 (ASSFPSRFCPHPTSPPPSLPQQGMTPP) are disordered. The short motif at 669-673 (PPPAY) is the PY motif; recruits WW domain-containing proteins and is thereby required for ubiquitination and inhibition of the channel by NEDD4 and NEDD4L element.

Belongs to the amiloride-sensitive sodium channel (TC 1.A.6) family. SCNN1A subfamily. Heterotrimer; containing an alpha/SCNN1A, a beta/SCNN1B and a gamma/SCNN1G subunit. Interacts with WWP1 (via WW domains). Interacts with WWP2 (via WW domains); inhibits the channel. Interacts with BPIFA1; the interaction is indirect via SCNN1B and inhibits the proteolytic processing of SCNN1A and SCNN1G and the activation of ENaC. Interacts with the full-length immature form of PCSK9 (pro-PCSK9). Post-translationally, ubiquitinated. Can be ubiquitinated at multiple sites and undergo monoubiquitination and polyubiquitination. Ubiquitination by NEDD4 or NEDD4L inhibits the ENaC channel through endocytosis, intracellular retention and degradation of its individual subunits. In terms of processing, N-glycosylated. ENaC is activated through the proteolytic maturation of its subunits. Furin cleaves the SCNN1A subunit, which results in a stepwise increase in the open probability of the channel due to the release of an inhibitory tract. BPIFA1, which is recruited by the SCNN1B subunit, prevents the proteolytic activation of ENaC. As to expression, detected in kidney, lung and testis (at protein level). In the testis, detected within the seminiferous tubules but not in the interstitial cells (at protein level).

The protein localises to the apical cell membrane. The protein resides in the cell projection. It localises to the cilium. Its subcellular location is the cytoplasmic granule. It is found in the cytoplasm. The protein localises to the cytoplasmic vesicle. The protein resides in the secretory vesicle. It localises to the acrosome. Its subcellular location is the flagellum. It catalyses the reaction Na(+)(in) = Na(+)(out). Originally identified and characterized by its inhibition by the diuretic drug amiloride. Its function is as follows. This is one of the three pore-forming subunits of the heterotrimeric epithelial sodium channel (ENaC), a critical regulator of sodium balance and fluid homeostasis. ENaC operates in epithelial tissues, where it mediates the electrodiffusion of sodium ions from extracellular fluid through the apical membrane of cells, with water following osmotically. It plays a key role in maintaining sodium homeostasis through electrogenic sodium reabsorption in the kidneys. Additionally, ENaC is essential for airway surface liquid homeostasis, which is crucial for proper mucus clearance. This is Epithelial sodium channel subunit alpha from Rattus norvegicus (Rat).